A 208-amino-acid polypeptide reads, in one-letter code: Small ribosomal subunit protein uS4 (208 aa).

Positions 95 to 157 constitute an S4 RNA-binding domain; sequence RRIDNVVYRA…DSLKKLVRSN (63 aa).

The protein belongs to the universal ribosomal protein uS4 family. In terms of assembly, part of the 30S ribosomal subunit. Contacts protein S5. The interaction surface between S4 and S5 is involved in control of translational fidelity.

Its function is as follows. One of the primary rRNA binding proteins, it binds directly to 16S rRNA where it nucleates assembly of the body of the 30S subunit. In terms of biological role, with S5 and S12 plays an important role in translational accuracy. The polypeptide is Small ribosomal subunit protein uS4 (Borrelia hermsii (strain HS1 / DAH)).